We begin with the raw amino-acid sequence, 487 residues long: Citrate/succinate antiporter (487 aa).

Helical transmembrane passes span 11 to 31 (LLAP…DGMP), 60 to 80 (FIAV…AKEL), 95 to 115 (GLAG…IFAL), 138 to 158 (TLTL…FTPS), 190 to 210 (IGGY…SMFV), 214 to 234 (APNV…ISWL), 237 to 257 (FLCF…LSYV), 288 to 308 (WTLI…SEVI), 309 to 329 (NATA…VVPW), 345 to 365 (LATL…DWFA), 379 to 399 (ATVI…ASLS), 401 to 421 (HTAT…GVPM), 424 to 444 (LCIL…YATG), and 463 to 483 (LGAI…WPIL).

It belongs to the SLC13A/DASS transporter (TC 2.A.47) family. DIT1 subfamily.

Its subcellular location is the cell inner membrane. In terms of biological role, responsible for the uptake of citrate in exchange to the efflux of succinate. Has a relatively broad specificity for C(4)-dicarboxylates and tricarboxylates. The sequence is that of Citrate/succinate antiporter (citT) from Escherichia coli O157:H7.